A 361-amino-acid chain; its full sequence is DNA replication and repair protein RecF (361 aa).

30-37 is a binding site for ATP; the sequence is GPNGSGKT.

Belongs to the RecF family.

The protein localises to the cytoplasm. The RecF protein is involved in DNA metabolism; it is required for DNA replication and normal SOS inducibility. RecF binds preferentially to single-stranded, linear DNA. It also seems to bind ATP. This is DNA replication and repair protein RecF from Yersinia pestis.